The chain runs to 40 residues: Metallothionein-1 (40 aa).

It belongs to the metallothionein superfamily. Type 5 family.

This protein binds cations of several transition elements. It is thought to be involved in detoxification processes. This Drosophila melanogaster (Fruit fly) protein is Metallothionein-1 (MtnA).